The following is a 400-amino-acid chain: Enoyl-[acyl-carrier-protein] reductase [NADH] 2 (400 aa).

NAD(+)-binding positions include 48-53 (GASSGF), 75-76 (FE), 112-113 (DA), and 141-142 (LA). Tyr228 contributes to the substrate binding site. Catalysis depends on Tyr238, which acts as the Proton donor. Residues Lys247 and 276 to 278 (LVT) contribute to the NAD(+) site.

This sequence belongs to the TER reductase family. In terms of assembly, monomer.

It carries out the reaction a 2,3-saturated acyl-[ACP] + NAD(+) = a (2E)-enoyl-[ACP] + NADH + H(+). The protein operates within lipid metabolism; fatty acid biosynthesis. Involved in the final reduction of the elongation cycle of fatty acid synthesis (FAS II). Catalyzes the reduction of a carbon-carbon double bond in an enoyl moiety that is covalently linked to an acyl carrier protein (ACP). The polypeptide is Enoyl-[acyl-carrier-protein] reductase [NADH] 2 (Vibrio vulnificus (strain YJ016)).